The primary structure comprises 259 residues: Early E4 30 kDa protein (259 aa).

It belongs to the adenoviridae E4 30 to 34 kDa protein family. Interacts with E1B-55k.

The protein localises to the host nucleus. Its subcellular location is the host cytoplasm. Plays a major role to prevent cellular inhibition of viral genome replication by nuclear bodies. Assembles an SCF-like E3 ubiquitin ligase complex based on the cellular proteins ELOB, ELOC, CUL5 and RBX1, in cooperation with viral E1B-55K. This viral RING-type ligase ubiquitinates cellular substrates prior to proteasomal degradation: p53/TP53, LIG4, MRE11-RAD50-NBS1 (MRN) complex, ITGA3, DAXX and BLM. The polypeptide is Early E4 30 kDa protein (Canine adenovirus serotype 2 (strain Toronto A 26-61) (CAdV-2)).